Reading from the N-terminus, the 136-residue chain is SNARE-associated protein Snapin (136 aa).

Ala2 is subject to N-acetylalanine. Phosphoserine is present on Ser10. Residue Thr14 is modified to Phosphothreonine. Residues 37–126 are a coiled coil; that stretch reads VQQLDSHVHA…TARRRAMLDS (90 aa). Ser50 bears the Phosphoserine; by PKA mark. An interaction with TOR1A region spans residues 83–136; it reads KKLLNARRRVVLVNNILQNAQERLRRLNHSVAKETARRRAMLDSGIYPPGSPGK. Phosphoserine is present on Ser126. At Tyr129 the chain carries Phosphotyrosine. The residue at position 133 (Ser133) is a Phosphoserine.

It belongs to the SNAPIN family. Component of the biogenesis of lysosome-related organelles complex 1 (BLOC-1) composed of BLOC1S1, BLOC1S2, BLOC1S3, BLOC1S4, BLOC1S5, BLOC1S6, DTNBP1/BLOC1S7 and SNAPIN/BLOC1S8. Octamer composed of one copy each BLOC1S1, BLOC1S2, BLOC1S3, BLOC1S4, BLOC1S5, BLOC1S6, DTNBP1/BLOC1S7 and SNAPIN/BLOC1S8. The BLOC-1 complex associates with the AP-3 protein complex and membrane protein cargos. Component of the BLOC-one-related complex (BORC) which is composed of BLOC1S1, BLOC1S2, BORCS5, BORCS6, BORCS7, BORCS8, KXD1 and SNAPIN. Associates with the SNARE complex. Interacts with CSNK1D, SNAP23 and STX4A but not with STX1A, VAMP2 and SYT1. Interacts with SNAP25; the interaction with SNAP25 is increased by its phosphorylation. Interacts with CNTRL, NANOS1, PUM2 and RGS7. Interacts with TOR1A; the interaction is direct and associates SNAPIN with the CSN complex. In terms of assembly, (Microbial infection) Interacts with human cytomegalovirus/HHV-5 protein UL70. Post-translationally, phosphorylated by CSNK1D/CK1. Phosphorylated by PKD, phosphorylation controls SNAPIN protein stability. In terms of tissue distribution, expressed in male germ cells of adult testis (at protein level).

It localises to the membrane. The protein localises to the cytoplasm. The protein resides in the cytosol. It is found in the perinuclear region. Its subcellular location is the golgi apparatus membrane. It localises to the lysosome membrane. The protein localises to the cytoplasmic vesicle. The protein resides in the secretory vesicle. It is found in the synaptic vesicle membrane. Functionally, component of the BLOC-1 complex, a complex that is required for normal biogenesis of lysosome-related organelles (LRO), such as platelet dense granules and melanosomes. In concert with the AP-3 complex, the BLOC-1 complex is required to target membrane protein cargos into vesicles assembled at cell bodies for delivery into neurites and nerve terminals. The BLOC-1 complex, in association with SNARE proteins, is also proposed to be involved in neurite extension. Plays a role in intracellular vesicle trafficking and synaptic vesicle recycling. May modulate a step between vesicle priming, fusion and calcium-dependent neurotransmitter release through its ability to potentiate the interaction of synaptotagmin with the SNAREs and the plasma-membrane-associated protein SNAP25. Its phosphorylation state influences exocytotic protein interactions and may regulate synaptic vesicle exocytosis. May also have a role in the mechanisms of SNARE-mediated membrane fusion in non-neuronal cells. As part of the BORC complex may play a role in lysosomes movement and localization at the cell periphery. Associated with the cytosolic face of lysosomes, the BORC complex may recruit ARL8B and couple lysosomes to microtubule plus-end-directed kinesin motor. The protein is SNARE-associated protein Snapin (SNAPIN) of Homo sapiens (Human).